Consider the following 138-residue polypeptide: Lymphocyte antigen 6L (138 aa).

Positions 1–16 are cleaved as a signal peptide; sequence MERLVLTLCTLPLAVA. Asn-27 carries N-linked (GlcNAc...) asparagine glycosylation. The 95-residue stretch at 28–122 folds into the UPAR/Ly6 domain; that stretch reads LSCYQCFKVS…TPQEGRWALR (95 aa). Cystine bridges form between Cys-30–Cys-47 and Cys-103–Cys-108. The GPI-anchor amidated glycine moiety is linked to residue Gly-117. Residues 118–138 constitute a propeptide, removed in mature form; it reads RWALRGGLLLQVGLSLLRALL.

It is found in the cell membrane. This chain is Lymphocyte antigen 6L, found in Homo sapiens (Human).